Reading from the N-terminus, the 64-residue chain is Drosocin antimicrobial peptides (64 aa).

A signal peptide spans 1–19 (MKFTIVFLLLACVFAMAVA). A propeptide spanning residues 20-21 (TP) is cleaved from the precursor. Residue Ser-28 is glycosylated (O-linked (GalNAc...) serine). Residue Thr-32 is glycosylated (O-linked (GalNAc...) threonine). The critical for inhibition of translation, possibly due to its role in mediating interactions with bacterial 23S rRNA and peptide chain release factors stretch occupies residues 32–40 (TSHPRPIRV).

Belongs to the drosocin family. As to quaternary structure, associates with the bacterial 50S ribosomal complex, occupying the nascent peptide exit tunnel. Interacts with bacterial 23S rRNA; this interaction is direct. Interacts with bacterial rplV/50S ribosomal protein L22; this interaction is direct. Interacts with bacterial prfA/peptide chain release factor RF1; while associated with the bacterial 50S ribosomal complex, this interaction is direct and traps RF1 on the ribosome, inhibiting further translation. In terms of processing, proteolytically cleaved at a pair of basic residues corresponding to the RXK/RR optimal cleavage site for furin proteases to produce two distinct antibacterial peptides. O-glycosylated. O-glycosylation may be required for efficient uptake by target bacterial cells. Monosaccharide modification of Thr-32 provides better antibacterial activity than disaccharide modification or no modification. O-glycosylation of Thr-32 is not essential for antimicrobial activity but enhances this activity by mediating interactions with the 23S rRNA and increasing the efficiency of translation inhibition.

The protein resides in the secreted. Functionally, antibacterial peptide with strong anti-Gram-negative bacteria activity. Significantly contributes to antibacterial activity against Enterobacter cloacae but not Providencia burhodogranariea. Inhibitor of bacterial translation machinery that targets translation termination in a prfA- or prfB-dependent manner. Binds within the nascent peptide exit tunnel of the bacterial large ribosomal subunit, potentially interfering with nascent chain translocation that occurs post-peptide bond formation. Binds prfA/RF1 (and potentially prfB/RF2), trapping it on the ribosome after release of the nascent polypeptide chain and preventing further translation. The resulting depletion of peptide chain release factors further disrupts bacterial translation by preventing ribosomal peptide chain release and inducing stop codon readthrough. Entry into target Escherichia coli cells requires the bacterial peptide antibiotic transporter sbmA. Its function is as follows. Peptide with significant antibacterial activity against Providencia burhodogranariea but not Enterobacter cloacae. In Drosophila simulans (Fruit fly), this protein is Drosocin antimicrobial peptides (Dro).